The chain runs to 178 residues: Long polar fimbria protein A (178 aa).

An N-terminal signal peptide occupies residues Met-1–Ala-24.

It belongs to the fimbrial protein family.

It localises to the fimbrium. The protein is Long polar fimbria protein A (lpfA) of Salmonella typhimurium (strain LT2 / SGSC1412 / ATCC 700720).